Consider the following 122-residue polypeptide: Large ribosomal subunit protein uL14 (122 aa).

Belongs to the universal ribosomal protein uL14 family. Part of the 50S ribosomal subunit. Forms a cluster with proteins L3 and L19. In the 70S ribosome, L14 and L19 interact and together make contacts with the 16S rRNA in bridges B5 and B8.

Functionally, binds to 23S rRNA. Forms part of two intersubunit bridges in the 70S ribosome. The chain is Large ribosomal subunit protein uL14 from Chromobacterium violaceum (strain ATCC 12472 / DSM 30191 / JCM 1249 / CCUG 213 / NBRC 12614 / NCIMB 9131 / NCTC 9757 / MK).